Consider the following 132-residue polypeptide: Small ribosomal subunit protein uS8 (132 aa).

It belongs to the universal ribosomal protein uS8 family. As to quaternary structure, part of the 30S ribosomal subunit. Contacts proteins S5 and S12.

In terms of biological role, one of the primary rRNA binding proteins, it binds directly to 16S rRNA central domain where it helps coordinate assembly of the platform of the 30S subunit. This is Small ribosomal subunit protein uS8 (rpsH) from Caldanaerobacter subterraneus subsp. tengcongensis (strain DSM 15242 / JCM 11007 / NBRC 100824 / MB4) (Thermoanaerobacter tengcongensis).